We begin with the raw amino-acid sequence, 158 residues long: NAD(P)H-quinone oxidoreductase subunit J, chloroplastic (158 aa).

This sequence belongs to the complex I 30 kDa subunit family. As to quaternary structure, NDH is composed of at least 16 different subunits, 5 of which are encoded in the nucleus.

It localises to the plastid. It is found in the chloroplast thylakoid membrane. The enzyme catalyses a plastoquinone + NADH + (n+1) H(+)(in) = a plastoquinol + NAD(+) + n H(+)(out). It catalyses the reaction a plastoquinone + NADPH + (n+1) H(+)(in) = a plastoquinol + NADP(+) + n H(+)(out). NDH shuttles electrons from NAD(P)H:plastoquinone, via FMN and iron-sulfur (Fe-S) centers, to quinones in the photosynthetic chain and possibly in a chloroplast respiratory chain. The immediate electron acceptor for the enzyme in this species is believed to be plastoquinone. Couples the redox reaction to proton translocation, and thus conserves the redox energy in a proton gradient. In Cryptomeria japonica (Japanese cedar), this protein is NAD(P)H-quinone oxidoreductase subunit J, chloroplastic.